The sequence spans 400 residues: Serine/threonine transporter SstT (400 aa).

The next 10 helical transmembrane spans lie at 11–31 (IGLV…GWLA), 45–65 (FVGA…MAAI), 81–101 (IMYM…SFLF), 138–158 (AIAE…GFAL), 175–195 (AISQ…LGLV), 213–233 (ILMV…PLII), 242–264 (YPLV…SSAA), 295–315 (MAGA…TLGI), 327–347 (LVAT…LLLI), and 354–374 (FSIP…IGVI).

The protein belongs to the dicarboxylate/amino acid:cation symporter (DAACS) (TC 2.A.23) family.

It is found in the cell inner membrane. It carries out the reaction L-serine(in) + Na(+)(in) = L-serine(out) + Na(+)(out). It catalyses the reaction L-threonine(in) + Na(+)(in) = L-threonine(out) + Na(+)(out). Functionally, involved in the import of serine and threonine into the cell, with the concomitant import of sodium (symport system). The sequence is that of Serine/threonine transporter SstT from Psychrobacter cryohalolentis (strain ATCC BAA-1226 / DSM 17306 / VKM B-2378 / K5).